The following is a 352-amino-acid chain: Phosphate acyltransferase (352 aa).

This sequence belongs to the PlsX family. In terms of assembly, homodimer. Probably interacts with PlsY.

It is found in the cytoplasm. The catalysed reaction is a fatty acyl-[ACP] + phosphate = an acyl phosphate + holo-[ACP]. It functions in the pathway lipid metabolism; phospholipid metabolism. Functionally, catalyzes the reversible formation of acyl-phosphate (acyl-PO(4)) from acyl-[acyl-carrier-protein] (acyl-ACP). This enzyme utilizes acyl-ACP as fatty acyl donor, but not acyl-CoA. The polypeptide is Phosphate acyltransferase (Brucella anthropi (strain ATCC 49188 / DSM 6882 / CCUG 24695 / JCM 21032 / LMG 3331 / NBRC 15819 / NCTC 12168 / Alc 37) (Ochrobactrum anthropi)).